Consider the following 346-residue polypeptide: Histidinol-phosphate aminotransferase (346 aa).

Lys-209 bears the N6-(pyridoxal phosphate)lysine mark.

This sequence belongs to the class-II pyridoxal-phosphate-dependent aminotransferase family. Histidinol-phosphate aminotransferase subfamily. Homodimer. Pyridoxal 5'-phosphate is required as a cofactor.

The enzyme catalyses L-histidinol phosphate + 2-oxoglutarate = 3-(imidazol-4-yl)-2-oxopropyl phosphate + L-glutamate. Its pathway is amino-acid biosynthesis; L-histidine biosynthesis; L-histidine from 5-phospho-alpha-D-ribose 1-diphosphate: step 7/9. The polypeptide is Histidinol-phosphate aminotransferase (Vibrio cholerae serotype O1 (strain ATCC 39541 / Classical Ogawa 395 / O395)).